Here is a 185-residue protein sequence, read N- to C-terminus: Putative F-box protein At3g17400 (185 aa).

One can recognise an F-box domain in the interval 1 to 47 (MMTLSDLPSDLAEEVLSKIPVTSLRGVRATCKKWNTLSKDRSFTRKH).

In Arabidopsis thaliana (Mouse-ear cress), this protein is Putative F-box protein At3g17400.